A 151-amino-acid polypeptide reads, in one-letter code: MKAVIQRVSEARVVVDGEVVGAIERGILVLLGVEKGDAERDAAWLAEKVAGLRIFEDEAGKMNLSVREVTGGILAVSQFTLAGNCAKGRRPSFDTAAPPDEGKRLYGRFVDFMRETGIPTATGIFQADMKVHLVNDGPVTFILESPKATGG.

The short motif at 137–138 is the Gly-cisPro motif, important for rejection of L-amino acids element; sequence GP.

Belongs to the DTD family. In terms of assembly, homodimer.

Its subcellular location is the cytoplasm. The catalysed reaction is glycyl-tRNA(Ala) + H2O = tRNA(Ala) + glycine + H(+). It catalyses the reaction a D-aminoacyl-tRNA + H2O = a tRNA + a D-alpha-amino acid + H(+). In terms of biological role, an aminoacyl-tRNA editing enzyme that deacylates mischarged D-aminoacyl-tRNAs. Also deacylates mischarged glycyl-tRNA(Ala), protecting cells against glycine mischarging by AlaRS. Acts via tRNA-based rather than protein-based catalysis; rejects L-amino acids rather than detecting D-amino acids in the active site. By recycling D-aminoacyl-tRNA to D-amino acids and free tRNA molecules, this enzyme counteracts the toxicity associated with the formation of D-aminoacyl-tRNA entities in vivo and helps enforce protein L-homochirality. This chain is D-aminoacyl-tRNA deacylase, found in Geobacter metallireducens (strain ATCC 53774 / DSM 7210 / GS-15).